We begin with the raw amino-acid sequence, 3014 residues long: Genome polyprotein (3014 aa).

Residue Ser2 is modified to N-acetylserine; by host. The tract at residues 2 to 23 is interaction with STAT1; the sequence is STNPKPQRKTKRNTNRRPQDVK. The interaction with EIF2AK2/PKR stretch occupies residues 2–58; that stretch reads STNPKPQRKTKRNTNRRPQDVKFPGGGQIVGGVYLLPRRGPKLGVRATRKNSERSQP. The interaction with DDX3X stretch occupies residues 2–59; the sequence is STNPKPQRKTKRNTNRRPQDVKFPGGGQIVGGVYLLPRRGPKLGVRATRKNSERSQPR. Residues 2-75 are disordered; that stretch reads STNPKPQRKT…PKARRPTGRS (74 aa). Residues 2-168 are Cytoplasmic-facing; sequence STNPKPQRKT…EDGINYATGN (167 aa). Short sequence motifs (nuclear localization signal) lie at residues 5 to 13 and 38 to 43; these read PKPQRKTKR and PRRGPK. Positions 7 to 16 are enriched in basic residues; sequence PQRKTKRNTN. Ser53 is subject to Phosphoserine; by host. 2 consecutive short sequence motifs (nuclear localization signal) follow at residues 58 to 64 and 66 to 71; these read PRGRRQP and PKARRP. A compositionally biased stretch (basic residues) spans 58 to 72; sequence PRGRRQPIPKARRPT. A phosphoserine; by host mark is found at Ser99 and Ser116. An important for endoplasmic reticulum and mitochondrial localization region spans residues 112 to 152; the sequence is PRRKSPNLGRVIHTLTCGFPHLMGYIPLVGGPVGGVSRALA. Residues 122–173 form an interaction with APOA2 region; sequence VIHTLTCGFPHLMGYIPLVGGPVGGVSRALAHGVKVLEDGINYATGNLPGCP. Residues 164 to 167 are important for lipid droplets localization; sequence YATG. The helical transmembrane segment at 169–189 threads the bilayer; it reads LPGCPFSIFVLALLWCLTVPA. Residues 178 to 191 constitute a propeptide, ER anchor for the core protein, removed in mature form by host signal peptidase; it reads VLALLWCLTVPASA. Over 190 to 358 the chain is Lumenal; sequence SAVPYRNASG…AGGHWGVLLA (169 aa). Asn196, Asn209, and Asn234 each carry an N-linked (GlcNAc...) asparagine; by host glycan. The important for fusion stretch occupies residues 265–296; the sequence is LAGGAAFCSALYVGDACGALSLVGQMFTYKPR. N-linked (GlcNAc...) asparagine; by host glycosylation occurs at Asn305. A helical transmembrane segment spans residues 359-379; the sequence is AAYFASTANWAKVILVLFLFA. The Lumenal portion of the chain corresponds to 380 to 726; sequence GVDGRTHTVG…WEYIMLVFLL (347 aa). An HVR1 region spans residues 385–412; the sequence is THTVGGTVGQGLKSLTSFFNPGPQRQLQ. N-linked (GlcNAc...) (high mannose) asparagine; by host glycans are attached at residues Asn417, Asn423, and Asn430. 4 disulfide bridges follow: Cys429–Cys553, Cys452–Cys459, Cys487–Cys495, and Cys504–Cys509. Asn448 carries N-linked (GlcNAc...) asparagine; by host glycosylation. An HVR2 region spans residues 475 to 479; the sequence is ATISG. Positions 481-494 are CD81-binding 1; that stretch reads SDDKPYCWHYPPRP. N-linked (GlcNAc...) asparagine; by host glycosylation occurs at Asn533. The segment at 545-552 is CD81-binding 2; the sequence is PPAGNWFG. The N-linked (GlcNAc...) asparagine; by host glycan is linked to Asn557. Cys565 and Cys570 are joined by a disulfide. An N-linked (GlcNAc...) asparagine; by host glycan is attached at Asn578. 3 disulfides stabilise this stretch: Cys582-Cys586, Cys598-Cys621, and Cys608-Cys645. N-linked (GlcNAc...) (high mannose) asparagine; by host glycosylation is found at Asn624 and Asn646. Cys653 and Cys678 are joined by a disulfide. Positions 661–672 are PKR/eIF2-alpha phosphorylation homology domain (PePHD); it reads AELSPLLHTTTQ. A helical membrane pass occupies residues 727–747; it reads LADARICTCLLILLLICQAEA. At 748–758 the chain is on the lumenal side; sequence TCKNVIVLNAA. Residues 759–779 traverse the membrane as a helical segment; sequence AAAGNHGFFWGLLVVCLAWHV. Residues 780–783 lie on the Cytoplasmic side of the membrane; that stretch reads KGRL. A helical transmembrane segment spans residues 784 to 804; it reads VPGATYLCLGVWPLLLVRLLR. The Lumenal segment spans residues 805-814; it reads PHRALALDSS. Residues 815–835 form a helical membrane-spanning segment; the sequence is DGGTVGCLVLIVLTIFTLTPG. Over 836-882 the chain is Cytoplasmic; it reads YKKKVVLVMWWLQYFIARVEAIIHVWVPPLQVKGGRDAVIMLTCLFH. Residues 883-903 form a helical membrane-spanning segment; it reads PALGFEITKILFGILGPLYLL. At 904-929 the chain is on the lumenal side; the sequence is QHSLTKVPYFLRARALLRLCLLAKHL. In terms of domain architecture, Peptidase C18 spans 904-1027; sequence QHSLTKVPYF…DIKTSGWRLL (124 aa). Residues 905 to 1207 form a protease NS2-3 region; the sequence is HSLTKVPYFL…PVENLETTMR (303 aa). Cys923 carries the S-palmitoyl cysteine; by host lipid modification. The chain crosses the membrane as a helical span at residues 930 to 950; sequence VYGKYVQAALLHLGRLTGTYI. Residues 930-950 form an interaction with host SCPS1 region; that stretch reads VYGKYVQAALLHLGRLTGTYI. Over 951 to 1658 the chain is Cytoplasmic; that stretch reads YDHLAPMKDW…CMSADLEVIT (708 aa). Residues His953, Glu973, and Cys994 each act as for protease NS2 activity; shared with dimeric partner in the active site. Positions 1028–1209 constitute a Peptidase S29 domain; the sequence is APITAYAQQT…ENLETTMRSP (182 aa). Residues His1084 and Asp1108 each act as charge relay system; for serine protease NS3 activity in the active site. Residues Cys1124 and Cys1126 each coordinate Zn(2+). Ser1166 functions as the Charge relay system; for serine protease NS3 activity in the catalytic mechanism. Residues Cys1172 and His1176 each contribute to the Zn(2+) site. Residues 1218 to 1351 enclose the Helicase ATP-binding domain; it reads PAVPHEFQVG…ARLVVLATAI (134 aa). 1231–1238 is an ATP binding site; the sequence is APTGSGKS. Mg(2+)-binding residues include Ser1238 and Glu1318. A DECH box motif is present at residues 1317–1320; sequence DECH. A Helicase C-terminal domain is found at 1362–1539; it reads NIEEVALPSE…DLTPAETTVR (178 aa). The interval 1487–1499 is RNA-binding; that stretch reads QRRGRTGRGRHGI. Residues 1659 to 1679 traverse the membrane as a helical segment; that stretch reads STWVLVGGVVAALAAYCLTVG. The tract at residues 1680–1691 is NS3-binding; the sequence is SVAIVGRIILSG. The Cytoplasmic segment spans residues 1680–1806; the sequence is SVAIVGRIIL…AVTSPLTTHQ (127 aa). A helical membrane pass occupies residues 1807–1827; it reads TLLFNILGGWVASQIAPPTAA. Residues 1828 to 1829 are Lumenal-facing; sequence TA. The helical transmembrane segment at 1830-1850 threads the bilayer; sequence FVVSGMAGAAVGNIGLGRVLI. Asp1851 is a topological domain (cytoplasmic). The chain crosses the membrane as a helical span at residues 1852–1872; the sequence is ILAGYGTGVAGALVAFKIMCG. The Lumenal portion of the chain corresponds to 1873–1882; it reads ERPTAEELVN. The helical transmembrane segment at 1883–1903 threads the bilayer; that stretch reads LLPSILCPGALVVGVICAAVL. At 1904–1973 the chain is on the cytoplasmic side; sequence RRHIGPGEGA…WIGEDYSTPC (70 aa). Cys1973 carries S-palmitoyl cysteine; by host lipidation. The stretch at 1974 to 2003 is an intramembrane region; the sequence is DGTWLRAIWDWVCTALTDFKAWLQAKLLPQ. Over 2004-2993 the chain is Cytoplasmic; it reads LPGVPFFSCQ…YHSMSRARPR (990 aa). Zn(2+) contacts are provided by Cys2012, Cys2030, Cys2032, and Cys2053. The segment at 2121–2209 is FKBP8-binding; it reads EFFTELDGVR…ANSSASQLSA (89 aa). The transcriptional activation stretch occupies residues 2121–2334; sequence EFFTELDGVR…VPLPRRKRKP (214 aa). The segment at 2136-2140 is interaction with non-structural protein 4A; sequence PPCNP. The tract at residues 2190-2441 is interaction with host SKP2; it reads RLNRGSPPSL…ALITPCSAEE (252 aa). Residues Ser2195, Ser2198, Ser2202, Ser2205, Ser2208, and Ser2211 each carry the phosphoserine; by host modification. The ISDR stretch occupies residues 2211-2250; that stretch reads SLKATCTIQGHHPDADLIKANLLWRQCMGGNITRVEAENK. The interval 2211–2276 is interaction with EIF2AK2/PKR; the sequence is SLKATCTIQG…REISVSADCF (66 aa). The interval 2250-2307 is NS4B-binding; sequence KVEILDCFKPLKEEEDDREISVSADCFKKGPAFPPALPVWARPGYDPPLLETWKRPDY. Positions 2300–2378 are V3; that stretch reads ETWKRPDYDP…GTSSQHDSGP (79 aa). Disordered regions lie at residues 2315–2342 and 2359–2412; these read CPIP…DSTV and PSIE…GSWS. The span at 2316 to 2327 shows a compositional bias: pro residues; sequence PIPPAGPPPVPL. An SH3-binding motif is present at residues 2323–2326; that stretch reads PPVP. The short motif at 2328–2337 is the Nuclear localization signal element; sequence PRRKRKPMEL. Polar residues predominate over residues 2361–2375; it reads IEGQDSALGTSSQHD. The segment covering 2376–2385 has biased composition (basic and acidic residues); it reads SGPEEKRDDN. Ser2465 carries the phosphoserine; by host modification. In terms of domain architecture, RdRp catalytic spans 2637-2755; the sequence is PMAFSYDTRC…ICESQGTHED (119 aa). Mg(2+)-binding residues include Asp2643, Asp2741, and Asp2742. A helical transmembrane segment spans residues 2994–3014; sequence NLLLCLLLLSVGVGIFLLPAR.

The protein belongs to the hepacivirus polyprotein family. In terms of assembly, homooligomer. Interacts with E1 (via C-terminus). Interacts with the non-structural protein 5A. Interacts (via N-terminus) with host STAT1 (via SH2 domain); this interaction results in decreased STAT1 phosphorylation and ubiquitin-mediated proteasome-dependent STAT1 degradation, leading to decreased IFN-stimulated gene transcription. Interacts with host STAT3; this interaction constitutively activates STAT3. Interacts with host LTBR receptor. Interacts with host TNFRSF1A receptor and possibly induces apoptosis. Interacts with host HNRPK. Interacts with host YWHAE. Interacts with host UBE3A/E6AP. Interacts with host DDX3X. Interacts with host APOA2. Interacts with host RXRA protein. Interacts with host SP110 isoform 3/Sp110b; this interaction sequesters the transcriptional corepressor SP110 away from the nucleus. Interacts with host CREB3 nuclear transcription protein; this interaction triggers cell transformation. Interacts with host ACY3. Interacts with host C1QR1. Interacts with host RBM24; this interaction, which enhances the interaction of the mature core protein with 5'-UTR, may inhibit viral translation and favor replication. Interacts with host EIF2AK2/PKR; this interaction induces the autophosphorylation of EIF2AK2. Part of the viral assembly initiation complex composed of NS2, E1, E2, NS3, NS4A, NS5A and the mature core protein. Forms a heterodimer with envelope glycoprotein E2. Interacts with mature core protein. Interacts with protease NS2. The heterodimer E1/E2 interacts with host CLDN1; this interaction plays a role in viral entry into host cell. Interacts with host SPSB2 (via C-terminus). Part of the viral assembly initiation complex composed of NS2, E1, E2, NS3, NS4A, NS5A and the mature core protein. Interacts with host NEURL3; this interaction prevents E1 binding to glycoprotein E2. As to quaternary structure, forms a heterodimer with envelope glycoprotein E1. Interacts with host CD81 and SCARB1 receptors; these interactions play a role in viral entry into host cell. Interacts with host EIF2AK2/PKR; this interaction inhibits EIF2AK2 and probably allows the virus to evade the innate immune response. Interacts with host CD209/DC-SIGN and CLEC4M/DC-SIGNR. Interact with host SPCS1; this interaction is essential for viral particle assembly. Interacts with protease NS2. The heterodimer E1/E2 interacts with host CLDN1; this interaction plays a role in viral entry into host cell. Part of the viral assembly initiation complex composed of NS2, E1, E2, NS3, NS4A, NS5A and the mature core protein. Interacts with host SLC3A2/4F2hc; the interaction may facilitate viral entry into host cell. Interacts with human PLSCR1. In terms of assembly, homohexamer. Homoheptamer. Interacts with protease NS2. Homodimer. Interacts with host SPCS1; this interaction is essential for viral particle assembly. Interacts with envelope glycoprotein E1. Interacts with envelope glycoprotein E2. Interacts with viroporin p7. Interacts with serine protease/helicase NS3. Part of the replication complex composed of NS2, NS3, NS4A, NS4B, NS5A and the RNA-directed RNA polymerase embedded in an ER-derived membranous web. Part of the viral assembly initiation complex composed of NS2, E1, E2, NS3, NS4A, NS5A and the mature core protein. As to quaternary structure, interacts with protease NS2. Interacts with non-structural protein 4A; this interaction stabilizes the folding of NS3 serine protease. NS3-NS4A interaction is essential for NS3 activation and allows membrane anchorage of the latter. NS3/NS4A complex also prevents phosphorylation of host IRF3, thus preventing the establishment of dsRNA induced antiviral state. Interacts with host MAVS; this interaction leads to the cleavage and inhibition of host MAVS. Interacts with host TICAM1; this interaction leads to the cleavage and inhibition of host TICAM1. Interacts with host TANK-binding kinase/TBK1; this interaction results in the inhibition of the association between TBK1 and IRF3, which leads to the inhibition of IRF3 activation. Interacts with host RBM24. Part of the replication complex composed of NS2, NS3, NS4A, NS4B, NS5A and the RNA-directed RNA polymerase embedded in an ER-derived membranous web. Part of the viral assembly initiation complex composed of NS2, E1, E2, NS3, NS4A, NS5A and the mature core protein. In terms of assembly, interacts with NS3 serine protease; this interaction stabilizes the folding of NS3 serine protease. NS3-NS4A interaction is essential for NS3 activation and allows membrane anchorage of the latter. Interacts with non-structural protein 5A (via N-terminus). Part of the replication complex composed of NS2, NS3, NS4A, NS4B, NS5A and the RNA-directed RNA polymerase embedded in an ER-derived membranous web. Part of the viral assembly initiation complex composed of NS2, E1, E2, NS3, NS4A, NS5A and the mature core protein. Homomultimer. Interacts with non-structural protein NS5A. Interacts with host PLA2G4C; this interaction likely initiates the recruitment of replication complexes to lipid droplets. Interacts with host STING; this interaction disrupts the interaction between STING and TBK1 thereby suppressing the interferon signaling. Part of the replication complex composed of NS2, NS3, NS4A, NS4B, NS5A and the RNA-directed RNA polymerase embedded in an ER-derived membranous web. As to quaternary structure, monomer. Homodimer; dimerization is required for RNA-binding. Interacts with the mature core protein. Interacts (via N-terminus) with non-structural protein 4A. Interacts with non-structural protein 4B. Interacts (via region D2) with RNA-directed RNA polymerase. Part of the viral assembly initiation complex composed of NS2, E1, E2, NS3, NS4A, NS5A and the mature core protein. Part of the replication complex composed of NS2, NS3, NS4A, NS4B, NS5A and the RNA-directed RNA polymerase embedded in an ER-derived membranous web. Interacts with host GRB2. Interacts with host BIN1. Interacts with host PIK3R1. Interacts with host SRCAP. Interacts with host FKBP8. Interacts (via C-terminus) with host VAPB (via MSP domain). Interacts with host EIF2AK2/PKR; this interaction leads to disruption of EIF2AK2 dimerization by NS5A and probably allows the virus to evade the innate immune response. Interacts (via N-terminus) with host PACSIN2 (via N-terminus); this interaction attenuates protein kinase C alpha-mediated phosphorylation of PACSIN2 by disrupting the interaction between PACSIN2 and PRKCA. Interacts (via N-terminus) with host SRC kinase (via SH2 domain). Interacts with most Src-family kinases. Interacts with host IFI27 and SKP2; promotes the ubiquitin-mediated proteasomal degradation of NS5A. Interacts with host GPS2. Interacts with host TNFRSF21; this interaction allows the modulation by the virus of JNK, p38 MAPK, STAT3, and Akt signaling pathways in a DR6-dependent manner. Interacts (via N-terminus) with host CIDEB (via N-terminus); this interaction seems to regulate the association of HCV particles with APOE. Interacts with host CHKA/Choline Kinase-alpha; CHKA bridges host PI4KA and NS5A and potentiates NS5A-stimulated PI4KA activity, which then facilitates the targeting of the ternary complex to the ER for viral replication. Interacts with host SPSB2 (via C-terminus); this interaction targets NS5A for ubiquitination and degradation. Interacts with host RAB18; this interaction may promote the association of NS5A and other replicase components with lipid droplets. Interacts (via region D2) with host PPIA/CYPA; the interaction stimulates RNA-binding ability of NS5A and is dependent on the peptidyl-prolyl cis-trans isomerase activity of PPIA/CYPA. Interacts with host TRIM14; this interaction induces the degradation of NS5A. In terms of assembly, homooligomer. Interacts with non-structural protein 5A. Interacts with host VAPB. Interacts with host PRK2/PKN2. Interacts with host HNRNPA1 and SEPT6; these interactions facilitate viral replication. Part of the replication complex composed of NS2, NS3, NS4A, NS4B, NS5A and the RNA-directed RNA polymerase. Requires Zn(2+) as cofactor. Mg(2+) serves as cofactor. In terms of processing, specific enzymatic cleavages in vivo yield mature proteins. The structural proteins, core, E1, E2 and p7 are produced by proteolytic processing by host signal peptidases. The core protein precursor is synthesized as a 23 kDa, which is retained in the ER membrane through the hydrophobic signal peptide. Cleavage by the signal peptidase releases the 21 kDa mature core protein. The cleavage of the core protein precursor occurs between aminoacids 176 and 188 but the exact cleavage site is not known. Some degraded forms of the core protein appear as well during the course of infection. The other proteins (p7, NS2, NS3, NS4A, NS4B, NS5A and NS5B) are cleaved by the viral proteases. Autoprocessing between NS2 and NS3 is mediated by the NS2 cysteine protease catalytic domain and regulated by the NS3 N-terminal domain. Phosphorylated by host PKC and PKA. Post-translationally, ubiquitinated; mediated by UBE3A and leading to core protein subsequent proteasomal degradation. In terms of processing, highly N-glycosylated. Palmitoylation is required for NS2/3 autoprocessing and E2 recruitment to membranes. Post-translationally, palmitoylated. This modification may play a role in its polymerization or in protein-protein interactions. In terms of processing, phosphorylated on serines in a basal form termed p56. p58 is a hyperphosphorylated form of p56. p56 and p58 coexist in the cell in roughly equivalent amounts. Hyperphosphorylation is dependent on the presence of NS4A. Host CSNK1A1/CKI-alpha or RPS6KB1 kinases may be responsible for NS5A phosphorylation. Tyrosine phosphorylation is essential for the interaction with host SRC. Post-translationally, the N-terminus is phosphorylated by host PRK2/PKN2.

The protein resides in the host endoplasmic reticulum membrane. It is found in the host mitochondrion membrane. The protein localises to the virion. It localises to the host cytoplasm. Its subcellular location is the host nucleus. The protein resides in the host lipid droplet. It is found in the virion membrane. The protein localises to the host mitochondrion. It localises to the host cell membrane. Its subcellular location is the host perinuclear region. The catalysed reaction is Hydrolysis of four peptide bonds in the viral precursor polyprotein, commonly with Asp or Glu in the P6 position, Cys or Thr in P1 and Ser or Ala in P1'.. The enzyme catalyses a ribonucleoside 5'-triphosphate + H2O = a ribonucleoside 5'-diphosphate + phosphate + H(+). It carries out the reaction ATP + H2O = ADP + phosphate + H(+). It catalyses the reaction RNA(n) + a ribonucleoside 5'-triphosphate = RNA(n+1) + diphosphate. With respect to regulation, inhibited by the antiviral drug hexamethylene amiloride. Inhibition by amantadine appears to be genotype-dependent. Also inhibited by long-alkyl-chain iminosugar derivatives. Activity is up-regulated by PRK2/PKN2-mediated phosphorylation. In terms of biological role, packages viral RNA to form a viral nucleocapsid, and promotes virion budding. Participates in the viral particle production as a result of its interaction with the non-structural protein 5A. Binds RNA and may function as a RNA chaperone to induce the RNA structural rearrangements taking place during virus replication. Modulates viral translation initiation by interacting with viral IRES and 40S ribosomal subunit. Affects various cell signaling pathways, host immunity and lipid metabolism. Prevents the establishment of cellular antiviral state by blocking the interferon-alpha/beta (IFN-alpha/beta) and IFN-gamma signaling pathways and by blocking the formation of phosphorylated STAT1 and promoting ubiquitin-mediated proteasome-dependent degradation of STAT1. Activates STAT3 leading to cellular transformation. Regulates the activity of cellular genes, including c-myc and c-fos. May repress the promoter of p53, and sequester CREB3 and SP110 isoform 3/Sp110b in the cytoplasm. Represses cell cycle negative regulating factor CDKN1A, thereby interrupting an important check point of normal cell cycle regulation. Targets transcription factors involved in the regulation of inflammatory responses and in the immune response: suppresses TNF-induced NF-kappa-B activation, and activates AP-1. Binds to dendritic cells (DCs) via C1QR1, resulting in down-regulation of T-lymphocytes proliferation. Alters lipid metabolism by interacting with hepatocellular proteins involved in lipid accumulation and storage. Induces up-regulation of FAS promoter activity, and thereby contributes to the increased triglyceride accumulation in hepatocytes (steatosis). Forms a heterodimer with envelope glycoprotein E2, which mediates virus attachment to the host cell, virion internalization through clathrin-dependent endocytosis and fusion with host membrane. Fusion with the host cell is most likely mediated by both E1 and E2, through conformational rearrangements of the heterodimer required for fusion rather than a classical class II fusion mechanism. E1/E2 heterodimer binds host apolipoproteins such as APOB and ApoE thereby forming a lipo-viro-particle (LVP). APOE associated to the LVP allows the initial virus attachment to cell surface receptors such as the heparan sulfate proteoglycans (HSPGs), syndecan-1 (SDC1), syndecan-1 (SDC2), the low-density lipoprotein receptor (LDLR) and scavenger receptor class B type I (SCARB1). The cholesterol transfer activity of SCARB1 allows E2 exposure and binding of E2 to SCARB1 and the tetraspanin CD81. E1/E2 heterodimer binding on CD81 activates the epithelial growth factor receptor (EGFR) signaling pathway. Diffusion of the complex E1-E2-EGFR-SCARB1-CD81 to the cell lateral membrane allows further interaction with Claudin 1 (CLDN1) and occludin (OCLN) to finally trigger HCV entry. Functionally, forms a heterodimer with envelope glycoprotein E1, which mediates virus attachment to the host cell, virion internalization through clathrin-dependent endocytosis and fusion with host membrane. Fusion with the host cell is most likely mediated by both E1 and E2, through conformational rearrangements of the heterodimer required for fusion rather than a classical class II fusion mechanism. The interaction between envelope glycoprotein E2 and host apolipoprotein E/APOE allows the proper assembly, maturation and infectivity of the viral particles. This interaction is probably promoted via the up-regulation of cellular autophagy by the virus. E1/E2 heterodimer binds host apolipoproteins such as APOB and APOE thereby forming a lipo-viro-particle (LVP). APOE associated to the LVP allows the initial virus attachment to cell surface receptors such as the heparan sulfate proteoglycans (HSPGs), syndecan-1 (SDC1), syndecan-1 (SDC2), the low-density lipoprotein receptor (LDLR) and scavenger receptor class B type I (SCARB1). The cholesterol transfer activity of SCARB1 allows E2 exposure and binding of E2 to SCARB1 and the tetraspanin CD81. E1/E2 heterodimer binding on CD81 activates the epithelial growth factor receptor (EGFR) signaling pathway. Diffusion of the complex E1-E2-EGFR-SCARB1-CD81 to the cell lateral membrane allows further interaction with Claudin 1 (CLDN1) and occludin (OCLN) to finally trigger HCV entry. Inhibits host EIF2AK2/PKR activation, preventing the establishment of an antiviral state. Viral ligand for CD209/DC-SIGN and CLEC4M/DC-SIGNR, which are respectively found on dendritic cells (DCs), and on liver sinusoidal endothelial cells and macrophage-like cells of lymph node sinuses. These interactions allow the capture of circulating HCV particles by these cells and subsequent facilitated transmission to permissive cells such as hepatocytes and lymphocyte subpopulations. The interaction between E2 and host amino acid transporter complex formed by SLC3A2 and SLC7A5/LAT1 may facilitate viral entry into host cell. Its function is as follows. Ion channel protein that acts as a viroporin and plays an essential role in the assembly, envelopment and secretion of viral particles. Regulates the host cell secretory pathway, which induces the intracellular retention of viral glycoproteins and favors assembly of viral particles. Creates a pore in acidic organelles and releases Ca(2+) and H(+) in the cytoplasm of infected cells, leading to a productive viral infection. High levels of cytoplasmic Ca(2+) may trigger membrane trafficking and transport of viral ER-associated proteins to viroplasms, sites of viral genome replication. This ionic imbalance induces the assembly of the inflammasome complex, which triggers the maturation of pro-IL-1beta into IL-1beta through the action of caspase-1. Targets also host mitochondria and induces mitochondrial depolarization. In addition of its role as a viroporin, acts as a lipid raft adhesion factor. In terms of biological role, cysteine protease required for the proteolytic auto-cleavage between the non-structural proteins NS2 and NS3. The N-terminus of NS3 is required for the function of NS2 protease (active region NS2-3). Promotes the initiation of viral particle assembly by mediating the interaction between structural and non-structural proteins. Displays three enzymatic activities: serine protease with a chymotrypsin-like fold, NTPase and RNA helicase. NS3 serine protease, in association with NS4A, is responsible for the cleavages of NS3-NS4A, NS4A-NS4B, NS4B-NS5A and NS5A-NS5B. The NS3/NS4A complex prevents phosphorylation of host IRF3, thus preventing the establishment of dsRNA induced antiviral state. The NS3/NS4A complex induces host amino acid transporter component SLC3A2, thus contributing to HCV propagation. NS3 RNA helicase binds to RNA and unwinds both dsDNA and dsRNA in the 3' to 5' direction, and likely resolves RNA complicated stable secondary structures in the template strand. Binds a single ATP and catalyzes the unzipping of a single base pair of dsRNA. Inhibits host antiviral proteins TBK1 and IRF3 thereby preventing the establishment of an antiviral state. Cleaves host MAVS/CARDIF thereby preventing the establishment of an antiviral state. Cleaves host TICAM1/TRIF, thereby disrupting TLR3 signaling and preventing the establishment of an antiviral state. Functionally, induces a specific membrane alteration that serves as a scaffold for the virus replication complex. This membrane alteration gives rise to the so-called ER-derived membranous web that contains the replication complex. NS4B self-interaction contributes to its function in membranous web formation. Promotes host TRIF protein degradation in a CASP8-dependent manner thereby inhibiting host TLR3-mediated interferon signaling. Disrupts the interaction between STING and TBK1 contributing to the inhibition of interferon signaling. Its function is as follows. Phosphorylated protein that is indispensable for viral replication and assembly. Both hypo- and hyperphosphorylated states are required for the viral life cycle. The hyperphosphorylated form of NS5A is an inhibitor of viral replication. Involved in RNA-binding and especially in binding to the viral genome. Zinc is essential for RNA-binding. Participates in the viral particle production as a result of its interaction with the mature viral core protein. Its interaction with host VAPB may target the viral replication complex to vesicles. Down-regulates viral IRES translation initiation. Mediates interferon resistance, presumably by interacting with and inhibiting host EIF2AK2/PKR. Prevents BIN1-induced apoptosis. Acts as a transcriptional activator of some host genes important for viral replication when localized in the nucleus. Via the interaction with host PACSIN2, modulates lipid droplet formation in order to promote virion assembly. Modulates TNFRSF21/DR6 signaling pathway for viral propagation. In terms of biological role, RNA-dependent RNA polymerase that performs primer-template recognition and RNA synthesis during viral replication. Initiates RNA transcription/replication at a flavin adenine dinucleotide (FAD), resulting in a 5'- FAD cap on viral RNAs. In this way, recognition of viral 5' RNA by host pattern recognition receptors can be bypassed, thereby evading activation of antiviral pathways. The chain is Genome polyprotein from Hepatitis C virus genotype 5a (isolate EUH1480) (HCV).